Consider the following 388-residue polypeptide: Putative 8-amino-7-oxononanoate synthase (388 aa).

R23 is a binding site for substrate. 110-111 serves as a coordination point for pyridoxal 5'-phosphate; that stretch reads GY. H135 lines the substrate pocket. Pyridoxal 5'-phosphate is bound by residues S182, 207 to 210, and 238 to 241; these read DDAH and TLSK. K241 carries the N6-(pyridoxal phosphate)lysine modification. T355 lines the substrate pocket.

Belongs to the class-II pyridoxal-phosphate-dependent aminotransferase family. BioF subfamily. As to quaternary structure, homodimer. Requires pyridoxal 5'-phosphate as cofactor.

It carries out the reaction 6-carboxyhexanoyl-[ACP] + L-alanine + H(+) = (8S)-8-amino-7-oxononanoate + holo-[ACP] + CO2. Its pathway is cofactor biosynthesis; biotin biosynthesis. Its function is as follows. Catalyzes the decarboxylative condensation of pimeloyl-[acyl-carrier protein] and L-alanine to produce 8-amino-7-oxononanoate (AON), [acyl-carrier protein], and carbon dioxide. This Thermodesulfovibrio yellowstonii (strain ATCC 51303 / DSM 11347 / YP87) protein is Putative 8-amino-7-oxononanoate synthase (bioF).